We begin with the raw amino-acid sequence, 272 residues long: Adenylate kinase (272 aa).

Glycine 55–threonine 60 is a binding site for ATP. Residues alanine 75 to valine 104 are NMP. AMP contacts are provided by residues threonine 76, arginine 81, glycine 102–valine 104, glycine 131–arginine 134, and glutamine 138. The LID stretch occupies residues glycine 172–aspartate 209. ATP is bound by residues arginine 173 and serine 182–tyrosine 183. 2 residues coordinate AMP: arginine 206 and arginine 217. An ATP-binding site is contributed by glutamine 245.

It belongs to the adenylate kinase family. AK2 subfamily. In terms of assembly, monomer.

The protein localises to the cytoplasm. It is found in the cytosol. The protein resides in the mitochondrion intermembrane space. The enzyme catalyses AMP + ATP = 2 ADP. In terms of biological role, catalyzes the reversible transfer of the terminal phosphate group between ATP and AMP. Plays an important role in cellular energy homeostasis and in adenine nucleotide metabolism. Adenylate kinase activity is critical for regulation of the phosphate utilization and the AMP de novo biosynthesis pathways. The chain is Adenylate kinase (adk1) from Talaromyces marneffei (Penicillium marneffei).